The primary structure comprises 139 residues: Large ribosomal subunit protein uL16c (139 aa).

Over residues 1–17 (MLSPKKTKFRKQHRGRM) the composition is skewed to basic residues. The interval 1-23 (MLSPKKTKFRKQHRGRMKGSASK) is disordered.

It belongs to the universal ribosomal protein uL16 family. As to quaternary structure, part of the 50S ribosomal subunit.

Its subcellular location is the plastid. The protein resides in the chloroplast. The chain is Large ribosomal subunit protein uL16c from Porphyra purpurea (Red seaweed).